The chain runs to 443 residues: Lysine-specific demethylase 8 (443 aa).

A compositionally biased stretch (basic and acidic residues) spans 139-165; it reads TKLEAERGVREPGLESSKLHSPGEHSN. A disordered region spans residues 139 to 174; the sequence is TKLEAERGVREPGLESSKLHSPGEHSNKKSFASVTG. The JmjC domain occupies 298–443; the sequence is GYLAQHQLFE…LSFSVSFWWS (146 aa). Fe cation-binding residues include H348, D350, and H427.

Fe(2+) is required as a cofactor.

The protein resides in the nucleus. The catalysed reaction is N(6),N(6)-dimethyl-L-lysyl(36)-[histone H3] + 2 2-oxoglutarate + 2 O2 = L-lysyl(36)-[histone H3] + 2 formaldehyde + 2 succinate + 2 CO2. In terms of biological role, histone demethylase required for G2/M phase cell cycle progression. Specifically demethylates dimethylated 'Lys-36' (H3K36me2) of histone H3, an epigenetic repressive mark, thereby acting as a transcription activator. May play a role in the regulation of the circadian clock. This Xenopus tropicalis (Western clawed frog) protein is Lysine-specific demethylase 8 (kdm8).